The primary structure comprises 808 residues: Tegument protein UL47 homolog (808 aa).

Disordered stretches follow at residues 1–21 (MQMP…RENQ) and 77–266 (PNEE…SFGE). Residues 83–92 (DNSRGRDRTR) show a composition bias toward basic and acidic residues. A compositionally biased stretch (basic residues) spans 133–160 (SRARSRRRSSSRRRHRNASMHMHFRGGS). Over residues 162–171 (RSATGSQNLI) the composition is skewed to polar residues. Positions 197-214 (RSSRVRRRHRRSSRRRGP) are enriched in basic residues. Residues 235–259 (PISDIDQKRLRKNSDTSSRGTRESP) show a composition bias toward basic and acidic residues.

Belongs to the alphaherpesvirinae HHV-1 UL47 family. Interacts with US3 kinase. Interacts with UL31 and UL34; these interactions seem important for efficient virion nuclear egress. Interacts with UL41/VHS. Post-translationally, phosphorylated by US3. This phosphorylation is required for proper nuclear localization. O-glycosylated.

The protein resides in the virion tegument. It localises to the host nucleus. Its subcellular location is the host cytoplasm. Functionally, tegument protein that can bind to various RNA transcripts. Plays a role in the attenuation of selective viral and cellular mRNA degradation by modulating the activity of host shutoff RNase UL41/VHS. Also plays a role in the primary envelopment of virions in the perinuclear space, probably by interacting with two nuclear egress proteins UL31 and UL34. Plays an important role in the splicing of glycoprotein/gC transcripts and thereby participates in bird-to-bird viral transmission. This is Tegument protein UL47 homolog (MDV060) from Gallus gallus (Chicken).